Here is an 80-residue protein sequence, read N- to C-terminus: uncharacterized protein (80 aa).

This sequence belongs to the BolA/IbaG family.

This is an uncharacterized protein from Buchnera aphidicola subsp. Schizaphis graminum (strain Sg).